Here is a 277-residue protein sequence, read N- to C-terminus: Diaminopimelate epimerase (277 aa).

Substrate-binding residues include N13, Q46, and N66. The Proton donor role is filled by C75. Residues 76 to 77 (GN), N160, N193, and 211 to 212 (ER) contribute to the substrate site. C220 serves as the catalytic Proton acceptor. A substrate-binding site is contributed by 221 to 222 (GS).

This sequence belongs to the diaminopimelate epimerase family. Homodimer.

The protein localises to the cytoplasm. It catalyses the reaction (2S,6S)-2,6-diaminopimelate = meso-2,6-diaminopimelate. Its pathway is amino-acid biosynthesis; L-lysine biosynthesis via DAP pathway; DL-2,6-diaminopimelate from LL-2,6-diaminopimelate: step 1/1. Functionally, catalyzes the stereoinversion of LL-2,6-diaminopimelate (L,L-DAP) to meso-diaminopimelate (meso-DAP), a precursor of L-lysine and an essential component of the bacterial peptidoglycan. The protein is Diaminopimelate epimerase of Legionella pneumophila (strain Lens).